The primary structure comprises 445 residues: Ribosomal protein uS12 methylthiotransferase RimO (445 aa).

An MTTase N-terminal domain is found at 6–121 (KKVAVVTLGC…ILETLEEAEK (116 aa)). The [4Fe-4S] cluster site is built by C15, C50, C84, C159, C163, and C166. The Radical SAM core domain maps to 145-375 (LSPKQYAYVK…MELQHDIAYE (231 aa)). One can recognise a TRAM domain in the interval 378–445 (QRWVGQTLKV…SYDLMGEVVQ (68 aa)).

This sequence belongs to the methylthiotransferase family. RimO subfamily. The cofactor is [4Fe-4S] cluster.

The protein localises to the cytoplasm. The enzyme catalyses L-aspartate(89)-[ribosomal protein uS12]-hydrogen + (sulfur carrier)-SH + AH2 + 2 S-adenosyl-L-methionine = 3-methylsulfanyl-L-aspartate(89)-[ribosomal protein uS12]-hydrogen + (sulfur carrier)-H + 5'-deoxyadenosine + L-methionine + A + S-adenosyl-L-homocysteine + 2 H(+). Catalyzes the methylthiolation of an aspartic acid residue of ribosomal protein uS12. The sequence is that of Ribosomal protein uS12 methylthiotransferase RimO from Desulfitobacterium hafniense (strain Y51).